The chain runs to 202 residues: Ribosomal RNA small subunit methyltransferase G (202 aa).

Residues Gly-75, Phe-80, 125 to 126, and Arg-139 each bind S-adenosyl-L-methionine; that span reads VQ.

This sequence belongs to the methyltransferase superfamily. RNA methyltransferase RsmG family.

The protein resides in the cytoplasm. In terms of biological role, specifically methylates the N7 position of a guanine in 16S rRNA. This Mesomycoplasma hyopneumoniae (strain 7448) (Mycoplasma hyopneumoniae) protein is Ribosomal RNA small subunit methyltransferase G.